The primary structure comprises 747 residues: Heterogeneous nuclear ribonucleoprotein U-like protein 2 (747 aa).

Residues 3-37 form the SAP domain; the sequence is VKRLKVTELRSELQRRGLDSRGLKVDLAQRLQEAL. 2 disordered regions span residues 40–242 and 627–666; these read EMLE…EEED and EEAR…GQRR. A compositionally biased stretch (acidic residues) spans 73–97; it reads GDEEEDEEEEEEDEEALLEDEDEEP. Low complexity predominate over residues 115 to 125; sequence EAAAMEAAAEP. The segment covering 137-147 has biased composition (gly residues); that stretch reads GSGGVNGGEEQ. Over residues 148 to 163 the composition is skewed to basic and acidic residues; sequence GLGKREEDEPEERSGD. A Phosphoserine modification is found at serine 161. At threonine 165 the chain carries Phosphothreonine. Phosphoserine occurs at positions 168, 185, 188, 226, and 228. Residues 185-223 show a composition bias toward basic and acidic residues; it reads SEKSKPAGSDGERRGVKRQRDEKDEHGRAYYEFREEAYH. In terms of domain architecture, B30.2/SPRY spans 226-419; the sequence is SKSPLPPEEE…VELNFGQKEE (194 aa). The span at 232 to 242 shows a compositional bias: acidic residues; sequence PEEEAKDEEED. Positions 627–639 are enriched in basic and acidic residues; that stretch reads EEARKLLPPSEKR. Residues 640 to 654 show a composition bias toward basic residues; sequence TNRRNNRNKRNRQNR. Omega-N-methylarginine occurs at positions 656, 684, 738, and 747.

In terms of assembly, binds to MLF1 and retains it in the nucleus.

Its subcellular location is the nucleus. This is Heterogeneous nuclear ribonucleoprotein U-like protein 2 (HNRNPUL2) from Homo sapiens (Human).